The chain runs to 1426 residues: Phospholipid-transporting ATPase VD (1426 aa).

Residues 1-97 are Cytoplasmic-facing; it reads MTEALQWARY…PRNLFEQFHR (97 aa). A helical membrane pass occupies residues 98-118; that stretch reads AANLYFLFLVVLNWVPLVEAF. The Exoplasmic loop portion of the chain corresponds to 119–121; that stretch reads QKE. A helical transmembrane segment spans residues 122-142; that stretch reads ITMLPLVVVLTIIAIKDGLED. At 143–321 the chain is on the cytoplasmic side; the sequence is YRKYKIDKQI…SKLERRANTD (179 aa). Residues 322 to 342 traverse the membrane as a helical segment; it reads VLWCVMLLVIMCLTGAVGHGI. Residues 343 to 365 are Exoplasmic loop-facing; it reads WLSRYEKMHFFNVPEPDGHIISP. Residues 366–386 traverse the membrane as a helical segment; it reads LLAGFYMFWTMIILLQVLIPI. Residues 387-1113 lie on the Cytoplasmic side of the membrane; it reads SLYVSIEIVK…HWCYTRLSNM (727 aa). The 4-aspartylphosphate intermediate role is filled by D438. ATP contacts are provided by D438, K439, and T440. D438 serves as a coordination point for Mg(2+). A Mg(2+)-binding site is contributed by T440. The interval 506-531 is disordered; it reads NGPLGNKPSNHLAGSSFTLGSGEGAS. Polar residues predominate over residues 512–524; it reads KPSNHLAGSSFTL. ATP is bound by residues E730, F772, K796, R840, T920, G921, D922, 996 to 1003, R1030, and K1036; that span reads GLIITGKT. D1056 contributes to the Mg(2+) binding site. Positions 1059 and 1060 each coordinate ATP. D1060 is a binding site for Mg(2+). The chain crosses the membrane as a helical span at residues 1114–1134; it reads ILYFFYKNVAYVNLLFWYQFF. The Exoplasmic loop segment spans residues 1135-1145; that stretch reads CGFSGTSMTDY. The chain crosses the membrane as a helical span at residues 1146 to 1166; the sequence is WVLIFFNLLFTSAPPVIYGVL. Residues 1167–1195 lie on the Cytoplasmic side of the membrane; the sequence is EKDVSAETLMQLPELYRSGQKSEAYLPHT. Residues 1196 to 1216 traverse the membrane as a helical segment; sequence FWITLLDAFYQSLVCFFVPYF. The Exoplasmic loop segment spans residues 1217-1224; sequence TYQGSDTD. A helical membrane pass occupies residues 1225–1245; that stretch reads IFAFGNPLNTAALFIVLLHLV. The Cytoplasmic portion of the chain corresponds to 1246 to 1252; it reads IESKSLT. A helical transmembrane segment spans residues 1253–1273; the sequence is WIHLLVIIGSILSYFLFAIVF. Topologically, residues 1274–1292 are exoplasmic loop; it reads GAMCVTCNPPSNPYWIMQE. A helical transmembrane segment spans residues 1293–1313; that stretch reads HMLDPVFYLVCILTTSIALLP. The Cytoplasmic segment spans residues 1314 to 1426; that stretch reads RFVYRVLQGS…MAGPSKGKES (113 aa). An ATP-binding site is contributed by 1364-1371; the sequence is ANQSAGKS.

Belongs to the cation transport ATPase (P-type) (TC 3.A.3) family. Type IV subfamily. As to quaternary structure, component of a P4-ATPase flippase complex which consists of a catalytic alpha subunit ATP10A and an accessory beta subunit TMEM30A. Requires Mg(2+) as cofactor. Autophosphorylated at the conserved aspartate of the P-type ATPase signature sequence. Expressed in placenta and, to a lesser extent, in kidney.

The protein resides in the cell membrane. The protein localises to the endoplasmic reticulum membrane. It carries out the reaction ATP + H2O + phospholipidSide 1 = ADP + phosphate + phospholipidSide 2.. The catalysed reaction is a beta-D-glucosyl-(1&lt;-&gt;1')-N-acylsphing-4-enine(out) + ATP + H2O = a beta-D-glucosyl-(1&lt;-&gt;1')-N-acylsphing-4-enine(in) + ADP + phosphate + H(+). Catalytic component of a P4-ATPase flippase complex, which catalyzes the hydrolysis of ATP coupled to the transport of glucosylceramide (GlcCer) from the outer to the inner leaflet of the plasma membrane. The sequence is that of Phospholipid-transporting ATPase VD from Homo sapiens (Human).